Reading from the N-terminus, the 496-residue chain is NADP-dependent glyceraldehyde-3-phosphate dehydrogenase (496 aa).

Residues R116 and 169–170 (NY) contribute to the substrate site. NADP(+) is bound by residues K192, T195, and D230. 245 to 249 (GGDTG) contributes to the NAD(+) binding site. Residue E264 is the Proton acceptor of the active site. 297-299 (RCT) contacts substrate. C298 acts as the Nucleophile in catalysis. E391 serves as a coordination point for NADP(+). The residue at position 404 (S404) is a Phosphoserine. A substrate-binding site is contributed by R451.

Belongs to the aldehyde dehydrogenase family. Interacts with 14-3-3 protein when phosphorylated. This interaction is released by divalent cations. Phosphorylated in shoots and non-photosynthetic tissues, but not in leaves.

It localises to the cytoplasm. It catalyses the reaction D-glyceraldehyde 3-phosphate + NADP(+) + H2O = (2R)-3-phosphoglycerate + NADPH + 2 H(+). With respect to regulation, insensitive to magnesium or calcium when dephosphorylated. When phosphorylated, 3-fold activation by magnesium or calcium, 2-fold activation by potassium, inhibited by ADP and AMP and insensitive to ATP or PPi. Important as a means of generating NADPH for biosynthetic reactions. The polypeptide is NADP-dependent glyceraldehyde-3-phosphate dehydrogenase (GAPN) (Triticum aestivum (Wheat)).